A 300-amino-acid polypeptide reads, in one-letter code: Small ribosomal subunit protein uS2 (300 aa).

Residues 269 to 300 (WEADGADWAASSAAAPAESWAAEAQGAEGAKW) form a disordered region.

This sequence belongs to the universal ribosomal protein uS2 family. In terms of assembly, component of the small ribosomal subunit. Mature ribosomes consist of a small (40S) and a large (60S) subunit. The 40S subunit contains about 33 different proteins and 1 molecule of RNA (18S). The 60S subunit contains about 49 different proteins and 3 molecules of RNA (25S, 5.8S and 5S). Interacts with rps21.

The protein resides in the cytoplasm. Required for the assembly and/or stability of the 40S ribosomal subunit. Required for the processing of the 20S rRNA-precursor to mature 18S rRNA in a late step of the maturation of 40S ribosomal subunits. This is Small ribosomal subunit protein uS2 (rps0) from Aspergillus terreus (strain NIH 2624 / FGSC A1156).